The following is a 570-amino-acid chain: Probable diguanylate cyclase DgcQ (570 aa).

2 helical membrane-spanning segments follow: residues 20-40 (FGPG…STLL) and 360-380 (IALT…WGVI). The GGDEF domain maps to 428–563 (QPFSVIQLDL…GRNRICASDA (136 aa)). Aspartate 436 lines the Mg(2+) pocket. Residues asparagine 444, histidine 449, and aspartate 453 each coordinate substrate. Glutamate 479 serves as a coordination point for Mg(2+). The active-site Proton acceptor is glutamate 479.

In terms of assembly, homodimer. Requires Mg(2+) as cofactor.

Its subcellular location is the cell inner membrane. It catalyses the reaction 2 GTP = 3',3'-c-di-GMP + 2 diphosphate. The protein operates within glycan metabolism; bacterial cellulose biosynthesis. It participates in purine metabolism; 3',5'-cyclic di-GMP biosynthesis. Catalyzes the synthesis of cyclic-di-GMP (c-di-GMP) via the condensation of 2 GTP molecules. Cyclic-di-GMP is a second messenger which controls cell surface-associated traits in bacteria. Involved in the regulation of cellulose production. The chain is Probable diguanylate cyclase DgcQ from Salmonella choleraesuis (strain SC-B67).